The chain runs to 395 residues: Elongation factor Tu (395 aa).

Residues 10-204 (KPHVNVGTIG…AVDNWVPLPE (195 aa)) enclose the tr-type G domain. Residues 19–26 (GHVDHGKT) form a G1 region. A GTP-binding site is contributed by 19–26 (GHVDHGKT). Thr-26 serves as a coordination point for Mg(2+). A G2 region spans residues 60 to 64 (GITIN). A G3 region spans residues 81 to 84 (DCPG). GTP is bound by residues 81–85 (DCPGH) and 136–139 (NKCD). Residues 136 to 139 (NKCD) form a G4 region. The interval 174-176 (SAL) is G5.

This sequence belongs to the TRAFAC class translation factor GTPase superfamily. Classic translation factor GTPase family. EF-Tu/EF-1A subfamily. In terms of assembly, monomer.

It is found in the cytoplasm. The enzyme catalyses GTP + H2O = GDP + phosphate + H(+). GTP hydrolase that promotes the GTP-dependent binding of aminoacyl-tRNA to the A-site of ribosomes during protein biosynthesis. The sequence is that of Elongation factor Tu from Porphyromonas gingivalis (strain ATCC 33277 / DSM 20709 / CIP 103683 / JCM 12257 / NCTC 11834 / 2561).